Here is a 1252-residue protein sequence, read N- to C-terminus: Guanine nucleotide exchange factor SDC25 (1252 aa).

In terms of domain architecture, SH3 spans 26–97 (QPIDVVECTY…PPSFTRSILN (72 aa)). Disordered stretches follow at residues 409-454 (IPAS…DTIW) and 623-648 (LNLD…DEYE). Positions 416 to 428 (TSCSSETSHHSPS) are enriched in low complexity. An N-terminal Ras-GEF domain is found at 782–914 (SNNRIKGGSK…LLKEVNQKFK (133 aa)). Positions 952-1199 (DPVLFATQLT…YQLSLIIEPK (248 aa)) constitute a Ras-GEF domain. Residues 1201–1252 (RKKVVPNSNSNNKSQEKSRDDQTDEGKTSTKKDRFSKFQLHKTKKKAPKVSK) form a disordered region. Residues 1214–1236 (SQEKSRDDQTDEGKTSTKKDRFS) are compositionally biased toward basic and acidic residues. The span at 1239-1252 (QLHKTKKKAPKVSK) shows a compositional bias: basic residues.

Promotes the exchange of Ras-bound GDP by GTP. This chain is Guanine nucleotide exchange factor SDC25 (SDC25), found in Saccharomyces cerevisiae (strain YJM789) (Baker's yeast).